Consider the following 475-residue polypeptide: 3-isopropylmalate dehydratase large subunit (475 aa).

[4Fe-4S] cluster-binding residues include cysteine 349, cysteine 409, and cysteine 412.

Belongs to the aconitase/IPM isomerase family. LeuC type 1 subfamily. Heterodimer of LeuC and LeuD. Requires [4Fe-4S] cluster as cofactor.

The enzyme catalyses (2R,3S)-3-isopropylmalate = (2S)-2-isopropylmalate. Its pathway is amino-acid biosynthesis; L-leucine biosynthesis; L-leucine from 3-methyl-2-oxobutanoate: step 2/4. In terms of biological role, catalyzes the isomerization between 2-isopropylmalate and 3-isopropylmalate, via the formation of 2-isopropylmaleate. The protein is 3-isopropylmalate dehydratase large subunit of Cereibacter sphaeroides (strain KD131 / KCTC 12085) (Rhodobacter sphaeroides).